Reading from the N-terminus, the 509-residue chain is ATP synthase subunit alpha (509 aa).

169-176 (GDRQTGKT) contributes to the ATP binding site.

It belongs to the ATPase alpha/beta chains family. F-type ATPases have 2 components, CF(1) - the catalytic core - and CF(0) - the membrane proton channel. CF(1) has five subunits: alpha(3), beta(3), gamma(1), delta(1), epsilon(1). CF(0) has three main subunits: a(1), b(2) and c(9-12). The alpha and beta chains form an alternating ring which encloses part of the gamma chain. CF(1) is attached to CF(0) by a central stalk formed by the gamma and epsilon chains, while a peripheral stalk is formed by the delta and b chains.

The protein localises to the cell inner membrane. The enzyme catalyses ATP + H2O + 4 H(+)(in) = ADP + phosphate + 5 H(+)(out). In terms of biological role, produces ATP from ADP in the presence of a proton gradient across the membrane. The alpha chain is a regulatory subunit. The polypeptide is ATP synthase subunit alpha (Methylocella silvestris (strain DSM 15510 / CIP 108128 / LMG 27833 / NCIMB 13906 / BL2)).